Here is a 707-residue protein sequence, read N- to C-terminus: Serine/threonine protein kinase UL97 (707 aa).

Residues 1–14 (MSSALRSRARSASL) show a composition bias toward low complexity. Disordered regions lie at residues 1 to 32 (MSSALRSRARSASLGTTTEGWDPPPLRRPSRA), 115 to 146 (EKEDAASDKENLRRPVVPSTSSRGSAASGDGY), 176 to 199 (FTGGSDPSDSVSGVRGGRKRPLRP), and 231 to 264 (ESQDSAVASGPGRVPQPLSGSSGEESATAVEADS). Over residues 115–127 (EKEDAASDKENLR) the composition is skewed to basic and acidic residues. Residues 178-188 (GGSDPSDSVSG) show a composition bias toward low complexity. Residues 337–345 (LGQGSFGEV) and Lys359 contribute to the ATP site. Asp456 functions as the Proton acceptor in the catalytic mechanism.

It belongs to the protein kinase superfamily. Tyr protein kinase family. HCMV ganciclovir subfamily. In terms of assembly, interacts with UL83. In terms of processing, autophosphorylates on serine and threonine residues.

Its subcellular location is the virion. The enzyme catalyses L-seryl-[protein] + ATP = O-phospho-L-seryl-[protein] + ADP + H(+). It catalyses the reaction L-threonyl-[protein] + ATP = O-phospho-L-threonyl-[protein] + ADP + H(+). Its function is as follows. Serine/threonine protein kinase that plays important roles in several processes including nuclear viral egress, viral replication or regulation of host cell cycle progression. Participates in the acquisition of tegument during virion morphogenesis in the nucleus. Redistributes the host nuclear lamina by phosphorylating cellular Lamins-A/C. Plays a role in viral DNA synthesis by phosphorylating the DNA polymerase processivity factor UL44. Stimulates host cell cycle to support viral DNA synthesis by phosphorylating host retinoblastoma/RB1 protein. Additional substrates have been identified including host EF1D or H2B. Also phosphorylates host SAMHD1 and thereby counteracts its antiviral effect by reducing its dNTP hydrolase activity. In Human cytomegalovirus (strain Towne) (HHV-5), this protein is Serine/threonine protein kinase UL97 (UL97).